We begin with the raw amino-acid sequence, 595 residues long: Elongation factor 4 (595 aa).

The tr-type G domain occupies 2-183; it reads KNIRNFCIIA…AIVEQVPAPA (182 aa). Residues 14–19 and 130–133 each bind GTP; these read DHGKST and NKVD.

Belongs to the TRAFAC class translation factor GTPase superfamily. Classic translation factor GTPase family. LepA subfamily.

It localises to the cell inner membrane. The catalysed reaction is GTP + H2O = GDP + phosphate + H(+). Its function is as follows. Required for accurate and efficient protein synthesis under certain stress conditions. May act as a fidelity factor of the translation reaction, by catalyzing a one-codon backward translocation of tRNAs on improperly translocated ribosomes. Back-translocation proceeds from a post-translocation (POST) complex to a pre-translocation (PRE) complex, thus giving elongation factor G a second chance to translocate the tRNAs correctly. Binds to ribosomes in a GTP-dependent manner. The protein is Elongation factor 4 of Porphyromonas gingivalis (strain ATCC 33277 / DSM 20709 / CIP 103683 / JCM 12257 / NCTC 11834 / 2561).